A 1068-amino-acid chain; its full sequence is WD repeat-containing protein on Y chromosome (1068 aa).

WD repeat units lie at residues 155–199 (DEVT…IRTA), 201–242 (SESI…RGPF), 322–361 (RIPL…EPSA), 365–404 (GHNG…LLQT), 455–494 (THAA…RKII), 507–546 (IIDI…VVRN), and 594–634 (FHTD…RRYS). The tract at residues 657–687 (SKRLASRPTPGNHGLQMGRAGRSTVLNRPED) is disordered. WD repeat units lie at residues 746–785 (KTGD…VPET) and 829–868 (GHLK…LGTL). Residues 1026–1068 (SAINIKQPSRRRSDKTNDTRNVRTPRARDLIALEMSSSHASQS) form a disordered region. Residues 1039 to 1056 (DKTNDTRNVRTPRARDLI) show a composition bias toward basic and acidic residues.

This chain is WD repeat-containing protein on Y chromosome, found in Drosophila yakuba (Fruit fly).